We begin with the raw amino-acid sequence, 383 residues long: Chitinase-3-like protein 1 (383 aa).

The first 21 residues, M1–A21, serve as a signal peptide directing secretion. The 362-residue stretch at Y22–A383 folds into the GH18 domain. C26 and C51 are joined by a disulfide. N60 carries N-linked (GlcNAc...) asparagine glycosylation. Residues E70–W71, G97–N100, Y141, L204–D207, and R263 each bind chitin. Residues C300 and C364 are joined by a disulfide bond. Positions Q324 to A338 are important for AKT1 activation and IL8 production. W352 is a chitin binding site.

It belongs to the glycosyl hydrolase 18 family. In terms of assembly, monomer. Detected in smooth muscle cells in atherosclerotic plaques. Detected in regions of vascular occlusion in the aorta.

It is found in the secreted. Its subcellular location is the extracellular space. The protein resides in the cytoplasm. It localises to the perinuclear region. The protein localises to the endoplasmic reticulum. Carbohydrate-binding lectin with a preference for chitin. Has no chitinase activity. May play a role in tissue remodeling and in the capacity of cells to respond to and cope with changes in their environment. Plays a role in T-helper cell type 2 (Th2) inflammatory response and IL-13-induced inflammation, regulating allergen sensitization, inflammatory cell apoptosis, dendritic cell accumulation and M2 macrophage differentiation. Facilitates invasion of pathogenic enteric bacteria into colonic mucosa and lymphoid organs. Mediates activation of AKT1 signaling pathway and subsequent IL8 production in colonic epithelial cells. Regulates antibacterial responses in lung by contributing to macrophage bacterial killing, controlling bacterial dissemination and augmenting host tolerance. Also regulates hyperoxia-induced injury, inflammation and epithelial apoptosis in lung. Stimulates migration and adhesion of cultured vascular smooth muscle cells. In Sus scrofa (Pig), this protein is Chitinase-3-like protein 1 (CHI3L1).